A 317-amino-acid chain; its full sequence is Lipoyl synthase (317 aa).

Positions 59, 64, 70, 85, 89, 92, and 298 each coordinate [4Fe-4S] cluster. In terms of domain architecture, Radical SAM core spans Trp-71–Leu-287.

Belongs to the radical SAM superfamily. Lipoyl synthase family. The cofactor is [4Fe-4S] cluster.

The protein localises to the cytoplasm. The enzyme catalyses [[Fe-S] cluster scaffold protein carrying a second [4Fe-4S](2+) cluster] + N(6)-octanoyl-L-lysyl-[protein] + 2 oxidized [2Fe-2S]-[ferredoxin] + 2 S-adenosyl-L-methionine + 4 H(+) = [[Fe-S] cluster scaffold protein] + N(6)-[(R)-dihydrolipoyl]-L-lysyl-[protein] + 4 Fe(3+) + 2 hydrogen sulfide + 2 5'-deoxyadenosine + 2 L-methionine + 2 reduced [2Fe-2S]-[ferredoxin]. The protein operates within protein modification; protein lipoylation via endogenous pathway; protein N(6)-(lipoyl)lysine from octanoyl-[acyl-carrier-protein]: step 2/2. Its function is as follows. Catalyzes the radical-mediated insertion of two sulfur atoms into the C-6 and C-8 positions of the octanoyl moiety bound to the lipoyl domains of lipoate-dependent enzymes, thereby converting the octanoylated domains into lipoylated derivatives. The protein is Lipoyl synthase of Bartonella bacilliformis (strain ATCC 35685 / KC583 / Herrer 020/F12,63).